The chain runs to 890 residues: Kinesin-like protein KIF20A (890 aa).

Ser-2 carries the N-acetylserine modification. Phosphoserine occurs at positions 7, 14, and 21. One can recognise a Kinesin motor domain in the interval 64–507 (KVKVYLRVRP…AKFSAIASQL (444 aa)). 160–167 (GVTNSGKT) is a binding site for ATP. Ser-528 carries the post-translational modification Phosphoserine; by PLK1. Ser-532, Ser-662, Ser-668, Ser-685, and Ser-825 each carry phosphoserine. The stretch at 611 to 762 (LDTQKELLEE…ESLQSAERAC (152 aa)) forms a coiled coil. Residues 763-890 (CHSTGAGKLR…LKSGPFGKKY (128 aa)) are globular. The segment at 832 to 865 (TNQENQQPNQQPPGKKPFLRNLLPRTPTCQSSTD) is disordered. Thr-857 bears the Phosphothreonine mark. Phosphoserine is present on residues Ser-867, Ser-878, and Ser-883.

The protein belongs to the TRAFAC class myosin-kinesin ATPase superfamily. Kinesin family. Phosphorylated by PLK1 at Ser-528 during mitosis, creating a docking site for PLK1 and recruiting PLK1 at central spindle.

Its subcellular location is the golgi apparatus. It localises to the cytoplasm. The protein resides in the cytoskeleton. It is found in the spindle. Functionally, mitotic kinesin required for chromosome passenger complex (CPC)-mediated cytokinesis. Following phosphorylation by PLK1, involved in recruitment of PLK1 to the central spindle. Interacts with guanosine triphosphate (GTP)-bound forms of RAB6A and RAB6B. May act as a motor required for the retrograde RAB6 regulated transport of Golgi membranes and associated vesicles along microtubules. Has a microtubule plus end-directed motility. The sequence is that of Kinesin-like protein KIF20A (KIF20A) from Homo sapiens (Human).